Consider the following 396-residue polypeptide: Bifunctional enzyme Fae/Hps (396 aa).

The interval 1–161 (MMLIGEALIG…HEKDRAAHAV (161 aa)) is formaldehyde-activating enzyme. The Proton donor role is filled by His17. Residues Asp19, Leu48, Lys66, Thr68, and Gln83 each coordinate substrate. The tract at residues 162 to 396 (MGFKISKLWD…IDQFRIMTDF (235 aa)) is 3-hexulose-6-phosphate synthase.

In the N-terminal section; belongs to the formaldehyde-activating enzyme family. The protein in the C-terminal section; belongs to the HPS/KGPDC family. HPS subfamily.

The catalysed reaction is 5,6,7,8-tetrahydromethanopterin + formaldehyde = 5,10-methylenetetrahydromethanopterin + H2O. The enzyme catalyses D-ribulose 5-phosphate + formaldehyde = D-arabino-hex-3-ulose 6-phosphate. It participates in carbohydrate biosynthesis; D-ribose 5-phosphate biosynthesis. Catalyzes the condensation of formaldehyde with tetrahydromethanopterin (H(4)MPT) to 5,10-methylenetetrahydromethanopterin. Its function is as follows. Catalyzes the reversible formation of ribulose-5-phosphate and formaldehyde from 3-hexulose-6-phosphate. This is Bifunctional enzyme Fae/Hps from Methanococcoides burtonii (strain DSM 6242 / NBRC 107633 / OCM 468 / ACE-M).